Reading from the N-terminus, the 235-residue chain is Aspartate/glutamate leucyltransferase (235 aa).

It belongs to the R-transferase family. Bpt subfamily.

It is found in the cytoplasm. The catalysed reaction is N-terminal L-glutamyl-[protein] + L-leucyl-tRNA(Leu) = N-terminal L-leucyl-L-glutamyl-[protein] + tRNA(Leu) + H(+). It carries out the reaction N-terminal L-aspartyl-[protein] + L-leucyl-tRNA(Leu) = N-terminal L-leucyl-L-aspartyl-[protein] + tRNA(Leu) + H(+). In terms of biological role, functions in the N-end rule pathway of protein degradation where it conjugates Leu from its aminoacyl-tRNA to the N-termini of proteins containing an N-terminal aspartate or glutamate. In Pseudomonas entomophila (strain L48), this protein is Aspartate/glutamate leucyltransferase.